Consider the following 78-residue polypeptide: Large ribosomal subunit protein bL28 (78 aa).

A disordered region spans residues 1–21 (MARVCQVTGKGPMTGNNVSHA).

Belongs to the bacterial ribosomal protein bL28 family.

This is Large ribosomal subunit protein bL28 from Bordetella petrii (strain ATCC BAA-461 / DSM 12804 / CCUG 43448).